The primary structure comprises 239 residues: 7-cyano-7-deazaguanine synthase (239 aa).

7-17 contributes to the ATP binding site; that stretch reads LSGGIDSSTLL. The Zn(2+) site is built by Cys-184, Cys-192, Cys-195, and Cys-198.

Belongs to the QueC family. It depends on Zn(2+) as a cofactor.

The catalysed reaction is 7-carboxy-7-deazaguanine + NH4(+) + ATP = 7-cyano-7-deazaguanine + ADP + phosphate + H2O + H(+). It functions in the pathway purine metabolism; 7-cyano-7-deazaguanine biosynthesis. Functionally, catalyzes the ATP-dependent conversion of 7-carboxy-7-deazaguanine (CDG) to 7-cyano-7-deazaguanine (preQ(0)). The polypeptide is 7-cyano-7-deazaguanine synthase (Archaeoglobus fulgidus (strain ATCC 49558 / DSM 4304 / JCM 9628 / NBRC 100126 / VC-16)).